We begin with the raw amino-acid sequence, 427 residues long: Enolase (427 aa).

A (2R)-2-phosphoglycerate-binding site is contributed by Q163. E205 (proton donor) is an active-site residue. Mg(2+)-binding residues include D242, E285, and D312. (2R)-2-phosphoglycerate is bound by residues K337, R366, S367, and K388. K337 functions as the Proton acceptor in the catalytic mechanism.

It belongs to the enolase family. It depends on Mg(2+) as a cofactor.

The protein resides in the cytoplasm. It localises to the secreted. Its subcellular location is the cell surface. It catalyses the reaction (2R)-2-phosphoglycerate = phosphoenolpyruvate + H2O. It functions in the pathway carbohydrate degradation; glycolysis; pyruvate from D-glyceraldehyde 3-phosphate: step 4/5. Its function is as follows. Catalyzes the reversible conversion of 2-phosphoglycerate (2-PG) into phosphoenolpyruvate (PEP). It is essential for the degradation of carbohydrates via glycolysis. The polypeptide is Enolase (Xanthobacter autotrophicus (strain ATCC BAA-1158 / Py2)).